The following is a 223-amino-acid chain: Ribose-5-phosphate isomerase A (223 aa).

Substrate-binding positions include 26–29 (TGST), 82–85 (DGAD), and 95–98 (KGGG). Glu104 (proton acceptor) is an active-site residue. Lys122 is a binding site for substrate.

This sequence belongs to the ribose 5-phosphate isomerase family. In terms of assembly, homodimer.

It carries out the reaction aldehydo-D-ribose 5-phosphate = D-ribulose 5-phosphate. The protein operates within carbohydrate degradation; pentose phosphate pathway; D-ribose 5-phosphate from D-ribulose 5-phosphate (non-oxidative stage): step 1/1. Its function is as follows. Catalyzes the reversible conversion of ribose-5-phosphate to ribulose 5-phosphate. The chain is Ribose-5-phosphate isomerase A from Streptococcus agalactiae serotype Ia (strain ATCC 27591 / A909 / CDC SS700).